A 313-amino-acid polypeptide reads, in one-letter code: Homoserine O-succinyltransferase (313 aa).

Cysteine 142 functions as the Acyl-thioester intermediate in the catalytic mechanism. Lysine 163 and serine 192 together coordinate substrate. The Proton acceptor role is filled by histidine 235. Glutamate 237 is a catalytic residue. Arginine 249 is a substrate binding site.

The protein belongs to the MetA family.

It localises to the cytoplasm. The catalysed reaction is L-homoserine + succinyl-CoA = O-succinyl-L-homoserine + CoA. It functions in the pathway amino-acid biosynthesis; L-methionine biosynthesis via de novo pathway; O-succinyl-L-homoserine from L-homoserine: step 1/1. In terms of biological role, transfers a succinyl group from succinyl-CoA to L-homoserine, forming succinyl-L-homoserine. The polypeptide is Homoserine O-succinyltransferase (Vibrio parahaemolyticus serotype O3:K6 (strain RIMD 2210633)).